A 150-amino-acid chain; its full sequence is Protein Smg homolog (150 aa).

Belongs to the Smg family.

In Methylobacillus flagellatus (strain ATCC 51484 / DSM 6875 / VKM B-1610 / KT), this protein is Protein Smg homolog.